A 259-amino-acid chain; its full sequence is Protein BEAN1 (259 aa).

Residues 36–56 (VLVASAVIGVVIILSCITIIV) traverse the membrane as a helical segment. Over residues 71–89 (RHRHHRHHHHHHHHRRRRH) the composition is skewed to basic residues. Disordered regions lie at residues 71-91 (RHRH…RHRE) and 152-259 (VGPG…ERIV). Positions 171–187 (LTDSCPTLDGTSDSGSG) are enriched in polar residues. The span at 221 to 230 (GAGPPSGLLP) shows a compositional bias: low complexity.

Interacts with NEDD4.

It localises to the membrane. The chain is Protein BEAN1 (BEAN1) from Homo sapiens (Human).